Here is a 616-residue protein sequence, read N- to C-terminus: MIKQAVILAGGLGSRLKDKTKTMPKGFLEIGGTAIVEQSVQKLLAHGIEKIVIGTGHCNEYYDNLAKKYPAIITVKNENYANTGSMGTLEVCASFVNESFLLLESDLIYDSAGLFSLINDERKNLILASGATKSGDEVYLEADEKNCLTGLSKNRDALKNIFGELVGITKLTKSTLDKMCAYAKIHHSDLPKMEYEHALLEAAKTIPVAIKRIEYFVWREIDNEDHLEMAVKNIYPHIVENEKLRAVRREVLLNPGPATTTDSVKYAQVSADICPREKAFGDLMQWLCDELKLFALASETNPDEYETVMFGCSGTGADEVMVSSCVPDTGRLLVIDNGSYGARMAKIADIYKIPMDIFKSSTYEPLDLQKLEAEFATKKYTHLACVYHETTTGLLNPLHIICPMAKKYGMVTIVDAVSAYCGMPMDLKSLGIDFMASTSNKNIQGMAGVGFVICNKAELEKTKDYPMRNYYLNLYDQYAYFAKTHQTRFTPPVQTMYALRQAVLETKQETVQKRYERYTACWNILVAAIKKLGLKMLVKEEHQSHFITAILEPETPKYSFEALHDFAAEHSFTIYPGKLGNIDTFRIANIGDIQPEEMRRFTVKLKEYMNGIGVGV.

The tract at residues 1–240 is 2-aminoethylphosphonate cytidylyltransferase; sequence MIKQAVILAG…VKNIYPHIVE (240 aa). Residues L8, G10, G11, K25, T83, T88, E104, and S105 each contribute to the CMP-(2-aminoethyl)phosphonate site. Positions 106 and 136 each coordinate Mg(2+). CMP-(2-aminoethyl)phosphonate is bound by residues D136, K153, and E196. E220 and D222 together coordinate Mg(2+). The 2-aminoethylphosphonate aminotransferase stretch occupies residues 250–616; sequence EVLLNPGPAT…EYMNGIGVGV (367 aa). Pyridoxal 5'-phosphate contacts are provided by S313, G314, T315, T390, K441, and T490.

It in the N-terminal section; belongs to the LicC/PntC cytidylyltransferase family. The protein in the C-terminal section; belongs to the class-V pyridoxal-phosphate-dependent aminotransferase family. PhnW subfamily. As to quaternary structure, homodimer. The cofactor is Mg(2+). Zn(2+) serves as cofactor. It depends on pyridoxal 5'-phosphate as a cofactor.

The catalysed reaction is (2-aminoethyl)phosphonate + CTP = CMP-(2-aminoethyl)phosphonate + diphosphate. The enzyme catalyses (2-aminoethyl)phosphonate + pyruvate = phosphonoacetaldehyde + L-alanine. It functions in the pathway phosphorus metabolism; phosphonate biosynthesis. With respect to regulation, cytidylyltransferase activity is inhibited in the presence of EDTA and is restored by the addition of Mg(2+) or Zn(2+). In terms of biological role, bifunctional transferase involved in the biosynthesis of cell-surface phosphonates. The aminotransferase region catalyzes the transformation of phosphonoacetaldehyde (PnAA) to 2-aminoethylphosphonate (AEP). The cytidylyltransferase region catalyzes the activation of 2-aminoethylphosphonate (AEP) to CMP-2-aminoethylphosphonate (CMP-AEP). Cannot use phosphocholine. Exhibits strong activity towards CTP, limited activity towards ATP and no activity with GTP. The sequence is that of Bifunctional 2-aminoethylphosphonate cytidylyltransferase/aminotransferase from Treponema denticola (strain ATCC 35405 / DSM 14222 / CIP 103919 / JCM 8153 / KCTC 15104).